Here is a 166-residue protein sequence, read N- to C-terminus: Transcriptional repressor NrdR (166 aa).

The segment at 3-34 (CPHCHHNGSRVVDSRPTDDGRVIRRRRECESC) is a zinc-finger region. The ATP-cone domain maps to 49 to 139 (LLVIKKNGTR…VYRQFKDTGV (91 aa)).

The protein belongs to the NrdR family. Zn(2+) serves as cofactor.

In terms of biological role, negatively regulates transcription of bacterial ribonucleotide reductase nrd genes and operons by binding to NrdR-boxes. The chain is Transcriptional repressor NrdR from Levilactobacillus brevis (strain ATCC 367 / BCRC 12310 / CIP 105137 / JCM 1170 / LMG 11437 / NCIMB 947 / NCTC 947) (Lactobacillus brevis).